The primary structure comprises 303 residues: ATP synthase subunit a (303 aa).

A run of 6 helical transmembrane segments spans residues 59 to 79, 122 to 142, 148 to 168, 181 to 201, 220 to 240, and 244 to 264; these read HTVM…IWGN, FLLT…VPWM, NLAV…VAGI, TGGV…LGLF, IVYF…VAAV, and FAFA…YVFA. The segment covering 281 to 290 has biased composition (basic and acidic residues); sequence HDDHGHDHPE. Positions 281–303 are disordered; the sequence is HDDHGHDHPEAGPSHDQGKAHHA.

Belongs to the ATPase A chain family. As to quaternary structure, F-type ATPases have 2 components, CF(1) - the catalytic core - and CF(0) - the membrane proton channel. CF(1) has five subunits: alpha(3), beta(3), gamma(1), delta(1), epsilon(1). CF(0) has three main subunits: a(1), b(2) and c(9-12). The alpha and beta chains form an alternating ring which encloses part of the gamma chain. CF(1) is attached to CF(0) by a central stalk formed by the gamma and epsilon chains, while a peripheral stalk is formed by the delta and b chains.

It localises to the cell inner membrane. Functionally, key component of the proton channel; it plays a direct role in the translocation of protons across the membrane. The sequence is that of ATP synthase subunit a from Myxococcus xanthus (strain DK1622).